The primary structure comprises 194 residues: MSKEEFPSEKNLDKEENTSKPKKAVKKEAAKGEETKKNNENQKLAKEIADLKEKNKDLEDKYLRSEAEIQNMQNRYTKERAQLIKYESQSLAKDVLPAMDNLERALSVEADDDVSKQLKKGVQMTLDALVKAMKDHGVVEIEADGVKFDPTLHQAVQTVAAENDDQKDHVVQVLQKGYQYKDRTLRPAMVVVAQ.

Composition is skewed to basic and acidic residues over residues 1–19 (MSKEEFPSEKNLDKEENTS) and 26–44 (KKEAAKGEETKKNNENQKL). The segment at 1-44 (MSKEEFPSEKNLDKEENTSKPKKAVKKEAAKGEETKKNNENQKL) is disordered.

The protein belongs to the GrpE family. Homodimer.

The protein localises to the cytoplasm. In terms of biological role, participates actively in the response to hyperosmotic and heat shock by preventing the aggregation of stress-denatured proteins, in association with DnaK and GrpE. It is the nucleotide exchange factor for DnaK and may function as a thermosensor. Unfolded proteins bind initially to DnaJ; upon interaction with the DnaJ-bound protein, DnaK hydrolyzes its bound ATP, resulting in the formation of a stable complex. GrpE releases ADP from DnaK; ATP binding to DnaK triggers the release of the substrate protein, thus completing the reaction cycle. Several rounds of ATP-dependent interactions between DnaJ, DnaK and GrpE are required for fully efficient folding. The sequence is that of Protein GrpE from Lactobacillus acidophilus (strain ATCC 700396 / NCK56 / N2 / NCFM).